Here is a 704-residue protein sequence, read N- to C-terminus: Transmembrane protein DDB_G0274347 (704 aa).

The interval 37–145 (VEQRDEVNDE…NNYNNNNTPT (109 aa)) is disordered. Positions 43 to 67 (VNDEFQEEEEELEDDDDDEDDEDEI) are enriched in acidic residues. Positions 85 to 99 (HNDKEKEKKKDKQEE) are enriched in basic and acidic residues. Positions 100 to 113 (YIDSDDDDDDDGDE) are enriched in acidic residues. Over residues 114–142 (NYYLNNNNNNNNNINNNNNYNNNNYNNNN) the composition is skewed to low complexity. Asparagine 166 carries N-linked (GlcNAc...) asparagine glycosylation. Residues 255-275 (ALISMALLISLVAIIFYLPLP) traverse the membrane as a helical segment. Asparagine 354 carries an N-linked (GlcNAc...) asparagine glycan. Transmembrane regions (helical) follow at residues 370 to 390 (LKIF…WLFA), 414 to 434 (TLLV…LYFI), and 513 to 533 (LVSF…FLIS). The segment covering 550-565 (TTTTTINTTTNTTSNT) has biased composition (low complexity). The interval 550-576 (TTTTTINTTTNTTSNTSQQSNPLSKRL) is disordered. Asparagine 556, asparagine 560, and asparagine 564 each carry an N-linked (GlcNAc...) asparagine glycan. Residues 566–576 (SQQSNPLSKRL) show a composition bias toward polar residues. 2 consecutive transmembrane segments (helical) span residues 609 to 629 (FIIV…GVPP) and 638 to 658 (IFFI…LIII).

It localises to the membrane. In Dictyostelium discoideum (Social amoeba), this protein is Transmembrane protein DDB_G0274347.